Reading from the N-terminus, the 305-residue chain is MELIFLGTSAGVPTRTRNVTAILLNLQHPTQSGLWLFDCGEGTQHQLLHTAFNPGKLDKIFISHLHGDHLFGLPGLLCSRSMSGIVQPLTIYGPQGIREFVETALRISGSWTDYPLEIVEIGAGEIFDDGLRKVTAYPLEHPLECYGYRIEEHDKPGALNAQALKAAGVPPGPLFQALKAGKTIMLEDGRQINGADYLAAPVPGKALAIFGDTGPCDAALDLAKGVDVMVHEATLDITMEAKANSRGHSSTRQAATLAREAGVGKLIITHVSSRYDDKGCQHLLRECRSIFPATELANDFTVFNV.

Residues H64, H66, D68, H69, H141, D212, and H270 each coordinate Zn(2+). Residue D68 is the Proton acceptor of the active site.

This sequence belongs to the RNase Z family. RNase BN subfamily. In terms of assembly, homodimer. Zn(2+) serves as cofactor.

Zinc phosphodiesterase, which has both exoribonuclease and endoribonuclease activities. The protein is Ribonuclease BN of Escherichia coli O7:K1 (strain IAI39 / ExPEC).